A 278-amino-acid polypeptide reads, in one-letter code: Ras-related protein Rab-40B (278 aa).

3 residues coordinate GTP: S23, G26, and K27. The tract at residues 41-49 (SPYGHPAGI) is switch-I. D69 is a Mg(2+) binding site. G72, N126, and R127 together coordinate GTP. Residues 72–88 (GQGRFCTIFRSYSRGAQ) form a switch-II region. Residues 175–228 (LLRHGMDRLWRPSKVLSLQELCCRAVVSCTPGHLVDKLPLPVALRSHLKSFSMA) enclose the SOCS box domain. Residues 245–278 (ANSSHKRNSFRKVRTIRPPQSPPRNCARNSCKIS) are disordered. Residues 248–259 (SHKRNSFRKVRT) show a composition bias toward basic residues. C270 carries the S-palmitoyl cysteine lipid modification. A lipid anchor (S-geranylgeranyl cysteine) is attached at C275.

This sequence belongs to the small GTPase superfamily. Rab family. In terms of assembly, component of the cullin-5-RING E3 ubiquitin-protein ligase complex (ECS(RAB40B) complex) composed of CUL5, Elongin BC (ELOB and ELOC), RNF7/RBX2 and RAB40B; RAB40B interaction with ECS complex is GTP-independent. Binds (GTP-bound) LIMA1; interaction promotes LIMA1 subcellular localization in lamellipodia during cell migration. Interacts (GTP-bound) with TKS5/SH3PXD2A (via PX domain); interaction promotes invadopodia-mediated extracellular matrix degradation. The cofactor is Mg(2+).

Its subcellular location is the cell membrane. The protein localises to the cytoplasm. The protein resides in the cytosol. It localises to the cell projection. It is found in the lamellipodium membrane. Its subcellular location is the ruffle. The catalysed reaction is GTP + H2O = GDP + phosphate + H(+). The protein operates within protein modification; protein ubiquitination. Its activity is regulated as follows. Regulated by guanine nucleotide exchange factors (GEFs) which promote the exchange of bound GDP for free GTP. Regulated by GTPase activating proteins (GAPs) which increase the GTP hydrolysis activity. Inhibited by GDP dissociation inhibitors (GDIs). Functionally, RAB40B small GTPase acts as substrate-recognition components of the ECS(RAB40B) E3 ubiquitin ligase complex which mediates the ubiquitination of target proteins. The Rab40 subfamily belongs to the Rab family that are key regulators of intracellular membrane trafficking, from the formation of transport vesicles to their fusion with membranes. Rabs cycle between an inactive GDP-bound form and an active GTP-bound form that is able to recruit to membranes different sets of downstream effectors directly responsible for vesicle formation, movement, tethering and fusion. As part of the ECS(RAB40B) complex, GTP-bound RAB40B promotes LIMA1/EPLIN ubiquitination and degradation, thereby regulating leading-edge actin dynamics during cell migration. As part of the ECS(RAB40B) complex, GTP-bound RAB40B also ubiquitinates RAP2A GTPase which promotes its localization to lamellipodia and activation to drive cell migration. The ECS(RAB40B) complex does not mediate canonical ubiquitin-dependent degradation of RAP2. RAB40B also binds TKS5/SH3PXD2A effector independently from ECS complex to promote invadopodia-mediated extracellular matrix degradation. The sequence is that of Ras-related protein Rab-40B from Mus musculus (Mouse).